The sequence spans 461 residues: Glycolipid 2-alpha-mannosyltransferase 2 (461 aa).

Residues 1 to 12 are Cytoplasmic-facing; it reads MKPSIFYSSRQP. Residues 13 to 35 traverse the membrane as a helical; Signal-anchor for type II membrane protein segment; the sequence is YLKYLAIILTTITIYVLTHSSYS. Over residues 35–52 the composition is skewed to polar residues; sequence SADPNINDVTTKPISETV. The disordered stretch occupies residues 35-138; that stretch reads SADPNINDVT…SSSKDPVKPE (104 aa). Residues 36 to 461 lie on the Lumenal side of the membrane; the sequence is ADPNINDVTT…QKPKEWEKYQ (426 aa). Low complexity-rich tracts occupy residues 61–70 and 106–116; these read SSPEQQQQQP and PKSSSSSPQQQ. Residues 117–126 show a composition bias toward basic and acidic residues; the sequence is EKQDTKKESE. Residue Glu-349 is the Nucleophile of the active site.

The protein belongs to the glycosyltransferase 15 family.

It is found in the golgi apparatus membrane. Functionally, involved in O-glycosylation of cell wall and secreted proteins. Transfers an alpha-D-mannosyl residue from GDP-mannose into lipid-linked oligosaccharide, forming an alpha-(1-&gt;2)-D-mannosyl-D-mannose linkage. Mainly responsible for the addition of the third mannose residue in an O-linked mannose pentamer. Can also substitute for MNT1 by adding the second mannose residue. Important for adherence to host surfaces and for virulence. The chain is Glycolipid 2-alpha-mannosyltransferase 2 (MNT2) from Candida albicans (strain SC5314 / ATCC MYA-2876) (Yeast).